An 81-amino-acid polypeptide reads, in one-letter code: Photosystem I iron-sulfur center (81 aa).

4Fe-4S ferredoxin-type domains lie at 2–31 (SHAV…MVPW) and 39–68 (IASS…IRVY). Positions 11, 14, 17, 21, 48, 51, 54, and 58 each coordinate [4Fe-4S] cluster.

The cyanobacterial PSI reaction center is composed of one copy each of PsaA,B,C,D,E,F,I,J,K,L,M and X, and forms trimeric complexes. It depends on [4Fe-4S] cluster as a cofactor.

It is found in the cellular thylakoid membrane. The enzyme catalyses reduced [plastocyanin] + hnu + oxidized [2Fe-2S]-[ferredoxin] = oxidized [plastocyanin] + reduced [2Fe-2S]-[ferredoxin]. Its function is as follows. Apoprotein for the two 4Fe-4S centers FA and FB of photosystem I (PSI); essential for photochemical activity. FB is the terminal electron acceptor of PSI, donating electrons to ferredoxin. The C-terminus interacts with PsaA/B/D and helps assemble the protein into the PSI complex. Required for binding of PsaD and PsaE to PSI. PSI is a plastocyanin/cytochrome c6-ferredoxin oxidoreductase, converting photonic excitation into a charge separation, which transfers an electron from the donor P700 chlorophyll pair to the spectroscopically characterized acceptors A0, A1, FX, FA and FB in turn. This Prochlorococcus marinus (strain MIT 9211) protein is Photosystem I iron-sulfur center.